We begin with the raw amino-acid sequence, 953 residues long: TPR repeat-containing protein ZIP4 (953 aa).

Residues 129 to 162 form a TPR 1 repeat; the sequence is ASFFHRSGLAWLDLGRVDLASACFEKATPLVSAA. The segment at 248–269 is disordered; that stretch reads AASPSSSSPRTPPYGGATPKTP. TPR repeat units follow at residues 432-465 and 473-506; these read HALLWNCGTEHFRAKNYDTSADLIERSMLYVSRD and ADCFRVLSICHIALQHLDRALEFVNEAYKVEPNI. The disordered stretch occupies residues 925–953; that stretch reads VSGDEPDECSQEEAPKASISGSMSQPVLV. The segment covering 943 to 953 has biased composition (polar residues); the sequence is ISGSMSQPVLV.

Interacts with HEI10 and SHOC1.

The protein localises to the nucleus. It is found in the chromosome. Required for crossover formation, complete synapsis of homologous chromosomes and bivalent formation during meiosis. Is specific to recombination events resulting in interference-sensitive crossovers (class I meiotic crossover) and works cooperatively with MER3 to promote crossovers. This Oryza sativa subsp. japonica (Rice) protein is TPR repeat-containing protein ZIP4.